We begin with the raw amino-acid sequence, 422 residues long: Metallocarboxypeptidase A (422 aa).

An N-terminal signal peptide occupies residues 1–17; it reads MRSVLSFALLAANVVSA. Residues 18–112 constitute a propeptide, activation peptide; sequence AVLAPFDYSG…FEAYSAGYAP (95 aa). Positions 119-419 constitute a Peptidase M14 domain; sequence SYHSYQDHLS…AGTVAMLKAV (301 aa). Residues His179 and Glu182 each contribute to the Zn(2+) site. Substrate-binding positions include 179-182, Arg237, and 254-255; these read HARE and NR. Residues Cys248 and Cys271 are joined by a disulfide bond. A Zn(2+)-binding site is contributed by His309. 310 to 311 serves as a coordination point for substrate; sequence SY. Catalysis depends on Glu385, which acts as the Proton donor/acceptor.

Belongs to the peptidase M14 family. Zn(2+) is required as a cofactor.

It is found in the secreted. Functionally, extracellular metalloprotease that contributes to pathogenicity. This Arthroderma otae (strain ATCC MYA-4605 / CBS 113480) (Microsporum canis) protein is Metallocarboxypeptidase A (MCPA).